Here is a 568-residue protein sequence, read N- to C-terminus: SLAIN motif-containing protein 1 (568 aa).

Disordered stretches follow at residues 1–22 (MMAE…SGPV), 59–92 (LLLL…TAAA), 139–162 (GGGP…SPPP), 235–256 (YTSR…STSE), and 291–403 (STSA…LRRS). Residues 21-56 (PVVNAELEVKKLQELVRKLEKQNEQLRSRAASAAAA) adopt a coiled-coil conformation. Pro residues predominate over residues 62–74 (LPPPPPAAPPPAG). The segment covering 75 to 92 (LQPLGPRSPPAATATAAA) has biased composition (low complexity). A compositionally biased stretch (gly residues) spans 139 to 149 (GGGPEPGGAGT). Polar residues predominate over residues 235-245 (YTSRGSPLSPQ). Serine 243 bears the Phosphoserine mark. 2 stretches are compositionally biased toward low complexity: residues 246–255 (SSIDSELSTS) and 291–307 (STSA…SLSS). Residues 316 to 329 (QEYDQYSLEDEEEF) are compositionally biased toward acidic residues. Low complexity predominate over residues 366–384 (SSQYFPSNNYQQQQYYSPQ). Over residues 385–395 (AQTPDQQPNRT) the composition is skewed to polar residues. Residues arginine 471 and arginine 543 each carry the asymmetric dimethylarginine modification.

It belongs to the SLAIN motif-containing family. As to quaternary structure, interacts with MAPRE1, MAPRE2, MAPRE3 and CKAP5. Interacts with ZDHHC17 (via ANK repeats). Expressed in embryonic stem cells. Expressed in brain.

The protein resides in the cytoplasm. Its subcellular location is the cytoskeleton. Microtubule plus-end tracking protein that might be involved in the regulation of cytoplasmic microtubule dynamics, microtubule organization and microtubule elongation. The chain is SLAIN motif-containing protein 1 (SLAIN1) from Homo sapiens (Human).